A 241-amino-acid chain; its full sequence is Trypsin-1 (241 aa).

Positions 1-13 (MKSLIFVLLLGAV) are cleaved as a signal peptide. Residues 14–19 (FAEEDK) constitute a propeptide, activation peptide. The Peptidase S1 domain maps to 20–239 (IVGGYECTKH…LSGWVRDTMA (220 aa)). Intrachain disulfides connect cysteine 26/cysteine 155, cysteine 44/cysteine 60, cysteine 128/cysteine 228, cysteine 135/cysteine 201, cysteine 166/cysteine 180, and cysteine 191/cysteine 215. Catalysis depends on charge relay system residues histidine 59 and aspartate 103. Serine 195 acts as the Charge relay system in catalysis.

It belongs to the peptidase S1 family.

The protein localises to the secreted. It localises to the extracellular space. It catalyses the reaction Preferential cleavage: Arg-|-Xaa, Lys-|-Xaa.. In Gadus morhua (Atlantic cod), this protein is Trypsin-1.